The chain runs to 286 residues: Myb family transcription factor PHL7 (286 aa).

The HTH myb-type domain maps to 12-72 (HASKQRLRWT…HLQKYRLAKY (61 aa)). The H-T-H motif DNA-binding region spans 43 to 68 (PKGVLRVMGVQGLTIYHVKSHLQKYR). A disordered region spans residues 74–97 (PDSSSEGKKTDKKESGDMLSGLDG). Residues 78–89 (SEGKKTDKKESG) show a composition bias toward basic and acidic residues. A coiled-coil region spans residues 104-124 (TEALKLQMEVQKRLHEQLEVQ). The LHEQLE signature appears at 117-122 (LHEQLE). Residues 152–227 (LGEPSAPVTG…TGEERLSKKP (76 aa)) are disordered.

The protein belongs to the MYB-CC family.

It is found in the nucleus. This Arabidopsis thaliana (Mouse-ear cress) protein is Myb family transcription factor PHL7.